Here is a 495-residue protein sequence, read N- to C-terminus: Cobyric acid synthase (495 aa).

The region spanning 249 to 443 (EININVIRLP…LHGLFDNGAW (195 aa)) is the GATase cobBQ-type domain. Cys-330 (nucleophile) is an active-site residue. His-435 is a catalytic residue.

The protein belongs to the CobB/CobQ family. CobQ subfamily.

The protein operates within cofactor biosynthesis; adenosylcobalamin biosynthesis. In terms of biological role, catalyzes amidations at positions B, D, E, and G on adenosylcobyrinic A,C-diamide. NH(2) groups are provided by glutamine, and one molecule of ATP is hydrogenolyzed for each amidation. The polypeptide is Cobyric acid synthase (Gloeothece citriformis (strain PCC 7424) (Cyanothece sp. (strain PCC 7424))).